The primary structure comprises 1257 residues: Receptor tyrosine-protein kinase erbB-2 (1257 aa).

The first 22 residues, 1-22 (MELAAWCRWGFLLALLPPGIAG), serve as a signal peptide directing secretion. Residues 23 to 654 (TQVCTGTDMK…PAEQRASPVT (632 aa)) are Extracellular-facing. Residues Cys-26 and Cys-53 are joined by a disulfide bond. Asn-68 and Asn-188 each carry an N-linked (GlcNAc...) asparagine glycan. 16 disulfides stabilise this stretch: Cys-163–Cys-193, Cys-196–Cys-205, Cys-200–Cys-213, Cys-221–Cys-228, Cys-225–Cys-236, Cys-237–Cys-245, Cys-241–Cys-253, Cys-256–Cys-265, Cys-269–Cys-296, Cys-300–Cys-312, Cys-316–Cys-332, Cys-335–Cys-339, Cys-343–Cys-368, Cys-476–Cys-506, Cys-513–Cys-522, and Cys-517–Cys-530. The N-linked (GlcNAc...) asparagine glycan is linked to Asn-260. Asn-532 is a glycosylation site (N-linked (GlcNAc...) asparagine). Cystine bridges form between Cys-533–Cys-542, Cys-546–Cys-562, Cys-565–Cys-578, Cys-569–Cys-586, Cys-589–Cys-598, Cys-602–Cys-625, Cys-628–Cys-636, and Cys-632–Cys-644. Asn-573 carries N-linked (GlcNAc...) asparagine glycosylation. The N-linked (GlcNAc...) asparagine glycan is linked to Asn-631. Residues 655–677 (FIIATVVGVLLFLILVVVVGILI) traverse the membrane as a helical segment. The required for interaction with KPNB1 and EEA1 stretch occupies residues 678–691 (KRRRQKIRKYTMRR). Positions 678–691 (KRRRQKIRKYTMRR) match the Nuclear localization signal motif. Residues 678–1257 (KRRRQKIRKY…PEYLGLDVPV (580 aa)) are Cytoplasmic-facing. In terms of domain architecture, Protein kinase spans 722–989 (LRKVKVLGSG…RMARDPQRFV (268 aa)). ATP-binding positions include 728-736 (LGSGAFGTV) and Lys-755. Asp-847 acts as the Proton acceptor in catalysis. Residue Tyr-879 is modified to Phosphotyrosine. Residues 1029–1181 (QQGFFSPDPT…PKTLSPGKNG (153 aa)) are disordered. Phosphoserine is present on residues Ser-1056, Ser-1080, Ser-1085, and Ser-1109. Tyr-1114 is subject to Phosphotyrosine. Tyr-1141 carries the phosphotyrosine; by autocatalysis modification. Positions 1149 to 1163 (PQPPLTPEGPLPPVR) are enriched in pro residues. Thr-1168 is modified (phosphothreonine). An interaction with PIK3C2B region spans residues 1197–1199 (EYL). Tyr-1198 is subject to Phosphotyrosine. The interval 1200-1257 (VPREGTASPPHPSPAFSPAFDNLYYWDQNSSEQGPPPSNFEGTPTAENPEYLGLDVPV) is disordered. Phosphotyrosine; by autocatalysis is present on Tyr-1250.

This sequence belongs to the protein kinase superfamily. Tyr protein kinase family. EGF receptor subfamily. In terms of assembly, homodimer. Heterodimer with EGFR, ERBB3 and ERBB4. Part of a complex with EGFR and either PIK3C2A or PIK3C2B. May interact with PIK3C2B when phosphorylated on Tyr-1198. Interacts with PRKCABP and PLXNB1. Interacts (when phosphorylated on Tyr-1250) with MEMO1. Interacts with MUC1. Interacts (when phosphorylated on Tyr-1141) with GRB7 (via SH2 domain). Interacts (when phosphorylated on Tyr-1250) with ERBIN Interacts with SRC, KPNB1, RANBP2, EEA1, CRM1, CLTC, PTK6, RPA194, MYOC and ACTB. Interacts with HSP90AA1 and HSP90AB1; the interaction suppresses ERBB2 kinase activity. Interacts with SORL1; this interaction regulates ERBB2 subcellular distribution by promoting its recycling after internalization from endosomes back to the plasma membrane, hence stimulates ERBB2-mediated signaling. Interacts with SH3BGRL. Interacts with ROR1. Post-translationally, autophosphorylated. Autophosphorylation occurs in trans, i.e. one subunit of the dimeric receptor phosphorylates tyrosine residues on the other subunit. Ligand-binding increases phosphorylation on tyrosine residues. Signaling via SEMA4C promotes phosphorylation at Tyr-1250. Dephosphorylated by PTPN12.

Its subcellular location is the cell membrane. The protein resides in the cell projection. It localises to the ruffle membrane. The protein localises to the early endosome. It is found in the cytoplasm. Its subcellular location is the perinuclear region. The protein resides in the nucleus. The enzyme catalyses L-tyrosyl-[protein] + ATP = O-phospho-L-tyrosyl-[protein] + ADP + H(+). Functionally, protein tyrosine kinase that is part of several cell surface receptor complexes, but that apparently needs a coreceptor for ligand binding. Essential component of a neuregulin-receptor complex, although neuregulins do not interact with it alone. GP30 is a potential ligand for this receptor. Regulates outgrowth and stabilization of peripheral microtubules (MTs). Upon ERBB2 activation, the MEMO1-RHOA-DIAPH1 signaling pathway elicits the phosphorylation and thus the inhibition of GSK3B at cell membrane. This prevents the phosphorylation of APC and CLASP2, allowing its association with the cell membrane. In turn, membrane-bound APC allows the localization of MACF1 to the cell membrane, which is required for microtubule capture and stabilization. Interacts (preferentially with the tyrosine phosphorylated form) with CPNE3; this interaction occurs at the cell membrane and is increased in a growth factor heregulin-dependent manner. In terms of biological role, in the nucleus is involved in transcriptional regulation. Associates with the 5'-TCAAATTC-3' sequence in the PTGS2/COX-2 promoter and activates its transcription. Implicated in transcriptional activation of CDKN1A; the function involves STAT3 and SRC. Involved in the transcription of rRNA genes by RNA Pol I and enhances protein synthesis and cell growth. In Rattus norvegicus (Rat), this protein is Receptor tyrosine-protein kinase erbB-2 (Erbb2).